A 190-amino-acid polypeptide reads, in one-letter code: Probable oligoribonuclease (190 aa).

Positions 19–181 (MVWVDLEMTG…QDIEESIEEL (163 aa)) constitute an Exonuclease domain. Residue Y140 is part of the active site.

This sequence belongs to the oligoribonuclease family.

In terms of biological role, 3'-to-5' exoribonuclease specific for small oligoribonucleotides. This chain is Probable oligoribonuclease (rexo2-1), found in Dictyostelium discoideum (Social amoeba).